The chain runs to 309 residues: Cutinase (309 aa).

The N-terminal stretch at 1–47 (MSALTSQPTSSGSSEKIPRLRGWRAKAAGVVLAALALTTGVAAPAPA) is a signal peptide. Serine 178 (nucleophile) is an active-site residue. Active-site charge relay system residues include aspartate 224 and histidine 256. Cysteine 289 and cysteine 305 are disulfide-bonded.

This sequence belongs to the AB hydrolase superfamily.

Its subcellular location is the secreted. The catalysed reaction is a carboxylic ester + H2O = an alcohol + a carboxylate + H(+). It catalyses the reaction a triacylglycerol + H2O = a diacylglycerol + a fatty acid + H(+). It carries out the reaction 1,2,3-tri-(9Z-octadecenoyl)-glycerol + H2O = di-(9Z)-octadecenoylglycerol + (9Z)-octadecenoate + H(+). The enzyme catalyses (6-hydroxyhexanoyl)(n) + H2O = (6-hydroxyhexanoyl)(n-1) + 6-hydroxyhexanoate + H(+). The catalysed reaction is cutin + H2O = cutin monomers.. Its activity is regulated as follows. No effect on activity by SDS or chelating agents ethylenediaminetetraacetic acid (EDTA) or sodium citrate. No effect on activity by metal ions Ag(+), Ba(2+), Ca(2+), Co(2+), Cu(2+), Mn(2+), Ni(2+), Pb(2+) or Zn(2+). Activated by 1 mM digitonin and sodium deoxycholate, and reducing agents 1 mM 1,4-dithiothreitol, beta-mercaptoethanol and ascorbic acid. Activated by benzene, n-hexane, p-xylene and toluene. Activated by Fe(3+). Inhibited slightly by 1 mM of different chain length fatty acids, and only marginally by 6.0 M urea. Inhibited strongly with chemical modification by reagents phenyl methyl sulfonylfluorid (PMSF), 1-ethyl-3-(3-dimethylaminopropyl) carbodiimide (EDAC), diethylpyrocarbonate (DEPC) and N-bromosuccinimide (NBS). Inhibited by pyridine, DMSO, t-butanol and dodecane. Inhibited by Li(+), Hg(2+) and Mg(2+). No inhibition with chemical modification by reagents N-acetylimidazole (NAI), citraconic anhydride (CA), iodoacetate (IA) and phenylglyoxal (PG). Functionally, catalyzes the hydrolysis of cutin, a polyester that forms the structure of plant cuticle. Shows esterase activity towards p-nitrophenol-linked aliphatic esters (pNP-aliphatic esters). Has a preference for medium chain length (C-4 to C-12) fatty acid esters. Active with p-nitrophenyl palmitate (p-NPP) as substrate. Hydrolyzes triacylglycerol substrates non-specifically with a preference for long, unsaturated fatty acyl chains with the highest activity for triolein. Substrates with cis-9 unsaturation are preferred over the saturated triacylglycerols. Hydrolyzes a wide range of natural oils, especially olive oil, with relatively high activity. Capable of catalyzing synthesis of the flavor ester isoamyl acetate by esterification of isoamyl alcohol using acetic acid as an acyl donor. Degrades synthetic aliphatic polyesters, namely poly(1,4-butylene succinate) extended with 1,6-diisocyanatohexane (PBSc-D) and poly(epsilon-caprolactone) (PCL) plastics. Does not degrade poly(lactic acid) (PLA) nor aromatic poly(ethylene terephthalate) (PET), the most abundant polyester plastic in the world. The chain is Cutinase from Amycolatopsis mediterranei (strain S699) (Nocardia mediterranei).